Here is a 199-residue protein sequence, read N- to C-terminus: dITP/XTP pyrophosphatase (199 aa).

8–13 (SGNAGK) serves as a coordination point for substrate. Residue Asp69 is the Proton acceptor of the active site. Residue Asp69 coordinates Mg(2+). Substrate is bound by residues Ser70, 154-157 (FGYN), Lys177, and 182-183 (HR).

It belongs to the HAM1 NTPase family. As to quaternary structure, homodimer. Mg(2+) is required as a cofactor.

It carries out the reaction XTP + H2O = XMP + diphosphate + H(+). The catalysed reaction is dITP + H2O = dIMP + diphosphate + H(+). It catalyses the reaction ITP + H2O = IMP + diphosphate + H(+). Pyrophosphatase that catalyzes the hydrolysis of nucleoside triphosphates to their monophosphate derivatives, with a high preference for the non-canonical purine nucleotides XTP (xanthosine triphosphate), dITP (deoxyinosine triphosphate) and ITP. Seems to function as a house-cleaning enzyme that removes non-canonical purine nucleotides from the nucleotide pool, thus preventing their incorporation into DNA/RNA and avoiding chromosomal lesions. The protein is dITP/XTP pyrophosphatase of Xylella fastidiosa (strain Temecula1 / ATCC 700964).